Here is a 421-residue protein sequence, read N- to C-terminus: 3-phosphoshikimate 1-carboxyvinyltransferase (421 aa).

3-phosphoshikimate is bound by residues K19, S20, and R24. K19 is a binding site for phosphoenolpyruvate. G88 and R116 together coordinate phosphoenolpyruvate. 4 residues coordinate 3-phosphoshikimate: S160, Q162, D307, and K334. Residue Q162 participates in phosphoenolpyruvate binding. The active-site Proton acceptor is D307. Residues R338 and R380 each contribute to the phosphoenolpyruvate site.

It belongs to the EPSP synthase family. In terms of assembly, monomer.

The protein localises to the cytoplasm. The enzyme catalyses 3-phosphoshikimate + phosphoenolpyruvate = 5-O-(1-carboxyvinyl)-3-phosphoshikimate + phosphate. The protein operates within metabolic intermediate biosynthesis; chorismate biosynthesis; chorismate from D-erythrose 4-phosphate and phosphoenolpyruvate: step 6/7. Its function is as follows. Catalyzes the transfer of the enolpyruvyl moiety of phosphoenolpyruvate (PEP) to the 5-hydroxyl of shikimate-3-phosphate (S3P) to produce enolpyruvyl shikimate-3-phosphate and inorganic phosphate. The protein is 3-phosphoshikimate 1-carboxyvinyltransferase of Thermotoga neapolitana (strain ATCC 49049 / DSM 4359 / NBRC 107923 / NS-E).